A 283-amino-acid chain; its full sequence is MMELYIGSHLSTAGGWNALLERSHEEGGTAFAFFPRSPYGKRSKALDPAGAAAFGARLKAEGYGPLVVHAPYVYNLAGKDEAKRTFAIEALAEDIELLTAIREAGQEVYINIHPGAHVGQGTETGCRLISEGLNQVFERTTGVMVLLETMAGKGTECGRNFEELATIMNGVENKANVGVTFDTCHVLDAGYDLVHDYDGVMRQLDEAIGLAEVKAIHVNDSQFGLGSHKDRHANIGQGQLGIPFFTRLVNDPTMAKLPMILETKEQTPTTHRDEIALLRGLVD.

9 residues coordinate Zn(2+): His-69, His-113, Glu-148, Asp-182, His-185, His-217, Asp-230, His-232, and Glu-262.

It belongs to the AP endonuclease 2 family. The cofactor is Zn(2+).

The enzyme catalyses Endonucleolytic cleavage to 5'-phosphooligonucleotide end-products.. Endonuclease IV plays a role in DNA repair. It cleaves phosphodiester bonds at apurinic or apyrimidinic (AP) sites, generating a 3'-hydroxyl group and a 5'-terminal sugar phosphate. The polypeptide is Probable endonuclease 4 (Bifidobacterium longum (strain DJO10A)).